We begin with the raw amino-acid sequence, 1191 residues long: Major DNA-binding protein (1191 aa).

Positions 820-821 (FW) match the Required for filament formation motif. Disordered regions lie at residues 1122-1146 (TAAG…AADE) and 1168-1191 (AGLI…RSRL). The segment covering 1127–1142 (AAGGGGSATEGGGGGA) has biased composition (gly residues). Positions 1173–1191 (GDDVRGDDEFELPSKRSRL) are required for nuclear localization.

Belongs to the herpesviridae major DNA-binding protein family. In terms of assembly, homooligomers. Forms double-helical filaments necessary for the formation of replication compartments within the host nucleus. Interacts with the origin-binding protein. Interacts with the helicase primase complex; this interaction stimulates primer synthesis activity of the helicase-primase complex. Interacts with the DNA polymerase. Interacts with the alkaline exonuclease; this interaction increases its nuclease processivity.

Its subcellular location is the host nucleus. In terms of biological role, single-stranded DNA-binding protein required for DNA replication. Its function is as follows. Plays several crucial roles in viral infection. Participates in the opening of the viral DNA origin to initiate replication by interacting with the origin-binding protein. May disrupt loops, hairpins and other secondary structures present on ssDNA to reduce and eliminate pausing of viral DNA polymerase at specific sites during elongation. Promotes viral DNA recombination by performing strand-transfer, characterized by the ability to transfer a DNA strand from a linear duplex to a complementary single-stranded DNA circle. Can also catalyze the renaturation of complementary single strands. Additionally, reorganizes the host cell nucleus, leading to the formation of prereplicative sites and replication compartments. This process is driven by the protein which can form double-helical filaments in the absence of DNA. The sequence is that of Major DNA-binding protein from Mus musculus (Mouse).